A 109-amino-acid polypeptide reads, in one-letter code: Parvalbumin beta 2 (109 aa).

At A2 the chain carries N-acetylalanine. EF-hand domains are found at residues 39 to 74 (KSPA…FSAG) and 78 to 109 (LSDA…MIKA). Residues D52, D54, S56, F58, E60, E63, D91, D93, D95, K97, and E102 each contribute to the Ca(2+) site.

It belongs to the parvalbumin family. Monomer.

Functionally, in muscle, parvalbumin is thought to be involved in relaxation after contraction. It binds two calcium ions. The polypeptide is Parvalbumin beta 2 (Gadus morhua (Atlantic cod)).